The sequence spans 249 residues: Proteasome subunit alpha (249 aa).

The protein belongs to the peptidase T1A family. As to quaternary structure, the 20S proteasome core is composed of 14 alpha and 14 beta subunits that assemble into four stacked heptameric rings, resulting in a barrel-shaped structure. The two inner rings, each composed of seven catalytic beta subunits, are sandwiched by two outer rings, each composed of seven alpha subunits. The catalytic chamber with the active sites is on the inside of the barrel. Has a gated structure, the ends of the cylinder being occluded by the N-termini of the alpha-subunits. Is capped at one or both ends by the proteasome regulatory ATPase, PAN.

The protein resides in the cytoplasm. Its activity is regulated as follows. The formation of the proteasomal ATPase PAN-20S proteasome complex, via the docking of the C-termini of PAN into the intersubunit pockets in the alpha-rings, triggers opening of the gate for substrate entry. Interconversion between the open-gate and close-gate conformations leads to a dynamic regulation of the 20S proteasome proteolysis activity. In terms of biological role, component of the proteasome core, a large protease complex with broad specificity involved in protein degradation. In Methanosarcina mazei (strain ATCC BAA-159 / DSM 3647 / Goe1 / Go1 / JCM 11833 / OCM 88) (Methanosarcina frisia), this protein is Proteasome subunit alpha.